The following is a 248-amino-acid chain: Ras-related protein RSR1 (248 aa).

Position 10–17 (10–17) interacts with GTP; sequence GAGGVGKS. Residues 32–40 carry the Effector region motif; sequence YDPTIEDSY. GTP is bound by residues 57–61 and 116–119; these read DTAGV and NKCD. The interval 182–248 is disordered; sequence LQKQQQQQQQ…SSGSKFCTII (67 aa). Low complexity predominate over residues 184-214; sequence KQQQQQQQEQDAEGQQQQQKSGKSKSSATQK. Composition is skewed to polar residues over residues 219-231 and 238-248; these read DGQT…LKQS and SSSGSKFCTII. C245 carries the post-translational modification Cysteine methyl ester. C245 is lipidated: S-geranylgeranyl cysteine. Positions 246–248 are cleaved as a propeptide — removed in mature form; it reads TII.

It belongs to the small GTPase superfamily. Ras family.

Its subcellular location is the cell membrane. It carries out the reaction GTP + H2O = GDP + phosphate + H(+). With respect to regulation, alternates between an inactive form bound to GDP and an active form bound to GTP. Activated by a guanine nucleotide-exchange factor (GEF) and inactivated by a GTPase-activating protein (GAP). Ras-related protein which binds GDP/GTP and possesses intrinsic GTPase activity. Involved in both yeast and hypha development. In the yeast phase, it is required for normal (polar) bud site selection and is involved in cell morphogenesis; in the yeast-mycelial transition it is involved in germ tube emergence; and in the development of the hyphae it is involved in cell elongation. The sequence is that of Ras-related protein RSR1 (RSR1) from Candida albicans (Yeast).